We begin with the raw amino-acid sequence, 517 residues long: Probable protein phosphatase 2C 20 (517 aa).

Residues 1-59 (MWVMQGERRRARAPWGPPDTGGALLERWISRERRSDSRDASGSAKQRSAMGNSLPVESK) form a disordered region. Residues 28 to 39 (WISRERRSDSRD) are compositionally biased toward basic and acidic residues. In terms of domain architecture, PPM-type phosphatase spans 70 to 373 (KYVVSSMQGW…DNTTVILVLF (304 aa)). Mn(2+) is bound by residues Asp105, Gly106, Glu323, and Asp364. Residues 380-517 (AVPPVDTDTD…PPHDDTYHRW (138 aa)) form a disordered region. Over residues 402–414 (GSNNATASDNNDP) the composition is skewed to polar residues. A compositionally biased stretch (low complexity) spans 438–455 (DATATAVGSSSTTAVAAD). The span at 499-517 (LPRSNPDKSPPHDDTYHRW) shows a compositional bias: basic and acidic residues.

Belongs to the PP2C family. Mg(2+) serves as cofactor. Requires Mn(2+) as cofactor.

It carries out the reaction O-phospho-L-seryl-[protein] + H2O = L-seryl-[protein] + phosphate. It catalyses the reaction O-phospho-L-threonyl-[protein] + H2O = L-threonyl-[protein] + phosphate. This chain is Probable protein phosphatase 2C 20, found in Oryza sativa subsp. japonica (Rice).